Consider the following 626-residue polypeptide: DNA-directed RNA polymerase subunit gamma (626 aa).

4 residues coordinate Zn(2+): cysteine 71, cysteine 73, cysteine 86, and cysteine 89. Residues aspartate 467, aspartate 469, and aspartate 471 each coordinate Mg(2+).

The protein belongs to the RNA polymerase beta' chain family. RpoC1 subfamily. In terms of assembly, in cyanobacteria the RNAP catalytic core is composed of 2 alpha, 1 beta, 1 beta', 1 gamma and 1 omega subunit. When a sigma factor is associated with the core the holoenzyme is formed, which can initiate transcription. Mg(2+) serves as cofactor. It depends on Zn(2+) as a cofactor.

It catalyses the reaction RNA(n) + a ribonucleoside 5'-triphosphate = RNA(n+1) + diphosphate. In terms of biological role, DNA-dependent RNA polymerase catalyzes the transcription of DNA into RNA using the four ribonucleoside triphosphates as substrates. The sequence is that of DNA-directed RNA polymerase subunit gamma from Microcystis aeruginosa (strain NIES-843 / IAM M-2473).